We begin with the raw amino-acid sequence, 189 residues long: Parkinson disease protein 7 (189 aa).

Residue alanine 2 is modified to N-acetylalanine. 2 S-palmitoyl cysteine lipidation sites follow: cysteine 46 and cysteine 53. Tyrosine 67 bears the Phosphotyrosine mark. Cysteine 106 (nucleophile) is an active-site residue. The residue at position 106 (cysteine 106) is a Cysteine sulfinic acid (-SO2H); alternate. Cysteine 106 carries S-palmitoyl cysteine; alternate lipidation. The active site involves histidine 126. Residue lysine 130 forms a Glycyl lysine isopeptide (Lys-Gly) (interchain with G-Cter in SUMO) linkage. Residue lysine 148 is modified to N6-acetyllysine. Lysine 182 carries the post-translational modification N6-succinyllysine.

Belongs to the peptidase C56 family. Homodimer. Binds EFCAB6/DJBP and PIAS2. Part of a ternary complex containing PARK7, EFCAB6/DJBP and AR. Interacts (via N-terminus) with OTUD7B. Interacts with BBS1, HIPK1, CLCF1 and MTERF. Forms a complex with PINK1 and PRKN. Interacts (via C-terminus) with NCF1; the interaction is enhanced by LPS and modulates NCF1 phosphorylation and membrane translocation. Interacts with NENF. The cofactor is Deglycase activity does not require glutathione as a cofactor, however, glycated glutathione constitutes a PARK7 substrate.. Post-translationally, sumoylated on Lys-130 by PIAS2 or PIAS4; which is enhanced after ultraviolet irradiation and essential for cell-growth promoting activity and transforming activity. Cys-106 is easily oxidized to sulfinic acid. In terms of processing, undergoes cleavage of a C-terminal peptide and subsequent activation of protease activity in response to oxidative stress. As to expression, highly expressed in pancreas, kidney, skeletal muscle, liver, testis and heart. Detected at slightly lower levels in placenta and brain (at protein level). Detected in astrocytes, Sertoli cells, spermatogonia, spermatids and spermatozoa. Expressed by pancreatic islets at higher levels than surrounding exocrine tissues.

It localises to the cell membrane. Its subcellular location is the cytoplasm. It is found in the nucleus. The protein localises to the membrane raft. The protein resides in the mitochondrion. It localises to the endoplasmic reticulum. It catalyses the reaction N(omega)-(1-hydroxy-2-oxopropyl)-L-arginyl-[protein] + H2O = lactate + L-arginyl-[protein] + H(+). The enzyme catalyses N(6)-(1-hydroxy-2-oxopropyl)-L-lysyl-[protein] + H2O = lactate + L-lysyl-[protein] + H(+). The catalysed reaction is S-(1-hydroxy-2-oxopropyl)-L-cysteinyl-[protein] + H2O = lactate + L-cysteinyl-[protein] + H(+). It carries out the reaction N(omega)-(1-hydroxy-2-oxoethyl)-L-arginyl-[protein] + H2O = L-arginyl-[protein] + glycolate + H(+). It catalyses the reaction N(6)-(1-hydroxy-2-oxoethyl)-L-lysyl-[protein] + H2O = glycolate + L-lysyl-[protein] + H(+). The enzyme catalyses S-(1-hydroxy-2-oxoethyl)-L-cysteinyl-[protein] + H2O = glycolate + L-cysteinyl-[protein] + H(+). The catalysed reaction is N(2)-(1-hydroxy-2-oxopropyl)-dGTP + H2O = lactate + dGTP + H(+). It carries out the reaction N(2)-(1-hydroxy-2-oxopropyl)-GTP + H2O = lactate + GTP + H(+). It catalyses the reaction N(2)-(1-hydroxy-2-oxopropyl)-GDP + H2O = lactate + GDP + H(+). The enzyme catalyses N(2)-(1-hydroxy-2-oxopropyl)-GMP + H2O = lactate + GMP + H(+). The catalysed reaction is N(2)-(1-hydroxy-2-oxoethyl)-dGTP + H2O = dGTP + glycolate + H(+). It carries out the reaction N(2)-(1-hydroxy-2-oxoethyl)-GTP + H2O = glycolate + GTP + H(+). It catalyses the reaction N(2)-(1-hydroxy-2-oxoethyl)-GDP + H2O = glycolate + GDP + H(+). The enzyme catalyses N(2)-(1-hydroxy-2-oxoethyl)-GMP + H2O = glycolate + GMP + H(+). The catalysed reaction is an N(2)-(1-hydroxy-2-oxopropyl)-guanosine in RNA + H2O = a guanosine in RNA + lactate + H(+). It carries out the reaction an N(2)-(1-hydroxy-2-oxopropyl)-2'-deoxyguanosine in DNA + H2O = a 2'-deoxyguanosine in DNA + lactate + H(+). It catalyses the reaction an N(2)-(1-hydroxy-2-oxoethyl)-guanosine in RNA + H2O = a guanosine in RNA + glycolate + H(+). The enzyme catalyses an N(2)-(1-hydroxy-2-oxoethyl)-2'-deoxyguanosine in DNA + H2O = a 2'-deoxyguanosine in DNA + glycolate + H(+). In terms of biological role, multifunctional protein with controversial molecular function which plays an important role in cell protection against oxidative stress and cell death acting as oxidative stress sensor and redox-sensitive chaperone and protease. It is involved in neuroprotective mechanisms like the stabilization of NFE2L2 and PINK1 proteins, male fertility as a positive regulator of androgen signaling pathway as well as cell growth and transformation through, for instance, the modulation of NF-kappa-B signaling pathway. Has been described as a protein and nucleotide deglycase that catalyzes the deglycation of the Maillard adducts formed between amino groups of proteins or nucleotides and reactive carbonyl groups of glyoxals. But this function is rebuted by other works. As a protein deglycase, repairs methylglyoxal- and glyoxal-glycated proteins, and releases repaired proteins and lactate or glycolate, respectively. Deglycates cysteine, arginine and lysine residues in proteins, and thus reactivates these proteins by reversing glycation by glyoxals. Acts on early glycation intermediates (hemithioacetals and aminocarbinols), preventing the formation of advanced glycation endproducts (AGE) that cause irreversible damage. Also functions as a nucleotide deglycase able to repair glycated guanine in the free nucleotide pool (GTP, GDP, GMP, dGTP) and in DNA and RNA. Is thus involved in a major nucleotide repair system named guanine glycation repair (GG repair), dedicated to reversing methylglyoxal and glyoxal damage via nucleotide sanitization and direct nucleic acid repair. Protects histones from adduction by methylglyoxal, controls the levels of methylglyoxal-derived argininine modifications on chromatin. Able to remove the glycations and restore histone 3, histone glycation disrupts both local and global chromatin architecture by altering histone-DNA interactions as well as histone acetylation and ubiquitination levels. Displays a very low glyoxalase activity that may reflect its deglycase activity. Eliminates hydrogen peroxide and protects cells against hydrogen peroxide-induced cell death. Required for correct mitochondrial morphology and function as well as for autophagy of dysfunctional mitochondria. Plays a role in regulating expression or stability of the mitochondrial uncoupling proteins SLC25A14 and SLC25A27 in dopaminergic neurons of the substantia nigra pars compacta and attenuates the oxidative stress induced by calcium entry into the neurons via L-type channels during pacemaking. Regulates astrocyte inflammatory responses, may modulate lipid rafts-dependent endocytosis in astrocytes and neuronal cells. In pancreatic islets, involved in the maintenance of mitochondrial reactive oxygen species (ROS) levels and glucose homeostasis in an age- and diet dependent manner. Protects pancreatic beta cells from cell death induced by inflammatory and cytotoxic setting. Binds to a number of mRNAs containing multiple copies of GG or CC motifs and partially inhibits their translation but dissociates following oxidative stress. Metal-binding protein able to bind copper as well as toxic mercury ions, enhances the cell protection mechanism against induced metal toxicity. In macrophages, interacts with the NADPH oxidase subunit NCF1 to direct NADPH oxidase-dependent ROS production, and protects against sepsis. The sequence is that of Parkinson disease protein 7 from Homo sapiens (Human).